The sequence spans 3373 residues: Intermembrane lipid transfer protein vps13A (3373 aa).

A Chorein N-terminal domain is found at 3-119; sequence FEGLVSDVLS…QAELKKKKLE (117 aa). 5 disordered regions span residues 818 to 858, 1028 to 1096, 1259 to 1304, 1648 to 1729, and 1872 to 1913; these read PKAT…VNSS, VPIN…KTAS, NNNK…DLEK, DPSI…EEEK, and QKKR…GKKD. The span at 823–839 shows a compositional bias: polar residues; sequence TPINDSNSPSSVSPKLI. Composition is skewed to low complexity over residues 840–858 and 1048–1066; these read STSP…VNSS and SSPN…QSPQ. Basic and acidic residues-rich tracts occupy residues 1263–1274 and 1288–1304; these read SIEKSKSIDSKL and RSDD…DLEK. Low complexity-rich tracts occupy residues 1659-1685, 1695-1716, and 1884-1898; these read QQQQ…RSQS, SSIG…SLSS, and SSST…STNS. Residues 1899-1909 are compositionally biased toward polar residues; that stretch reads FQTSTSGNSNS. Residues 2405–2706 form the SHR-BD domain; sequence TLSFYCQYWL…CYGWDEPSAE (302 aa). The segment at 2909 to 2933 is disordered; sequence RGNNASNNNNNNGMTSSQMRQSGSG. Low complexity predominate over residues 2911-2920; sequence NNASNNNNNN.

This sequence belongs to the VPS13 family.

It is found in the membrane. Functionally, mediates the transfer of lipids between membranes at organelle contact sites. This chain is Intermembrane lipid transfer protein vps13A (vps13A), found in Dictyostelium discoideum (Social amoeba).